We begin with the raw amino-acid sequence, 348 residues long: Histidinol-phosphate aminotransferase (348 aa).

Residues 1–31 (MLPTRDCVRQTPAYTPGEQPQTAGFTKLNTN) form a disordered region. Over residues 18–31 (EQPQTAGFTKLNTN) the composition is skewed to polar residues. K207 is subject to N6-(pyridoxal phosphate)lysine.

This sequence belongs to the class-II pyridoxal-phosphate-dependent aminotransferase family. Histidinol-phosphate aminotransferase subfamily. In terms of assembly, homodimer. It depends on pyridoxal 5'-phosphate as a cofactor.

The enzyme catalyses L-histidinol phosphate + 2-oxoglutarate = 3-(imidazol-4-yl)-2-oxopropyl phosphate + L-glutamate. It functions in the pathway amino-acid biosynthesis; L-histidine biosynthesis; L-histidine from 5-phospho-alpha-D-ribose 1-diphosphate: step 7/9. The sequence is that of Histidinol-phosphate aminotransferase from Microcystis aeruginosa (strain NIES-843 / IAM M-2473).